A 311-amino-acid chain; its full sequence is Endosome-associated-trafficking regulator 1 (311 aa).

Residues arginine 167–glycine 278 are a coiled coil.

The protein belongs to the ENTR1 family.

The protein resides in the cytoplasm. The protein localises to the early endosome. It is found in the endosome. Its subcellular location is the recycling endosome. It localises to the midbody. The protein resides in the cytoskeleton. The protein localises to the microtubule organizing center. It is found in the centrosome. Its subcellular location is the cilium basal body. Functionally, endosome-associated protein that plays a role in membrane receptor sorting, cytokinesis and ciliogenesis. This is Endosome-associated-trafficking regulator 1 from Danio rerio (Zebrafish).